A 216-amino-acid chain; its full sequence is Probable flavin-dependent thymidylate synthase (216 aa).

The ThyX domain maps to 1–216 (MSAKLISVTK…PSIAKALDWV (216 aa)). FAD-binding positions include Ser-55, 78–80 (RHR), and Glu-86. DUMP contacts are provided by residues 75 to 78 (QVLR), 86 to 90 (EFSQR), and Arg-155. Residues 78–88 (RHRSFHFQEFS) carry the ThyX motif motif. An FAD-binding site is contributed by His-177. Residue Arg-182 coordinates dUMP. Catalysis depends on Arg-182, which acts as the Involved in ionization of N3 of dUMP, leading to its activation.

The protein belongs to the thymidylate synthase ThyX family. As to quaternary structure, homotetramer. FAD is required as a cofactor.

The enzyme catalyses dUMP + (6R)-5,10-methylene-5,6,7,8-tetrahydrofolate + NADPH + H(+) = dTMP + (6S)-5,6,7,8-tetrahydrofolate + NADP(+). The protein operates within pyrimidine metabolism; dTTP biosynthesis. Functionally, catalyzes the reductive methylation of 2'-deoxyuridine-5'-monophosphate (dUMP) to 2'-deoxythymidine-5'-monophosphate (dTMP) while utilizing 5,10-methylenetetrahydrofolate (mTHF) as the methyl donor, and NADPH and FADH(2) as the reductant. The sequence is that of Probable flavin-dependent thymidylate synthase from Paramecium bursaria Chlorella virus 1 (PBCV-1).